The primary structure comprises 212 residues: Imidazole glycerol phosphate synthase subunit HisH (212 aa).

The 206-residue stretch at 3–208 (RIVIVDYGMG…GRMVCDLIST (206 aa)) folds into the Glutamine amidotransferase type-1 domain. The Nucleophile role is filled by cysteine 81. Catalysis depends on residues histidine 183 and glutamate 185.

Heterodimer of HisH and HisF.

Its subcellular location is the cytoplasm. It carries out the reaction 5-[(5-phospho-1-deoxy-D-ribulos-1-ylimino)methylamino]-1-(5-phospho-beta-D-ribosyl)imidazole-4-carboxamide + L-glutamine = D-erythro-1-(imidazol-4-yl)glycerol 3-phosphate + 5-amino-1-(5-phospho-beta-D-ribosyl)imidazole-4-carboxamide + L-glutamate + H(+). It catalyses the reaction L-glutamine + H2O = L-glutamate + NH4(+). Its pathway is amino-acid biosynthesis; L-histidine biosynthesis; L-histidine from 5-phospho-alpha-D-ribose 1-diphosphate: step 5/9. Its function is as follows. IGPS catalyzes the conversion of PRFAR and glutamine to IGP, AICAR and glutamate. The HisH subunit catalyzes the hydrolysis of glutamine to glutamate and ammonia as part of the synthesis of IGP and AICAR. The resulting ammonia molecule is channeled to the active site of HisF. The sequence is that of Imidazole glycerol phosphate synthase subunit HisH from Symbiobacterium thermophilum (strain DSM 24528 / JCM 14929 / IAM 14863 / T).